A 297-amino-acid chain; its full sequence is tRNA pseudouridine synthase B (297 aa).

Asp39 functions as the Nucleophile in the catalytic mechanism.

Belongs to the pseudouridine synthase TruB family. Type 1 subfamily.

The catalysed reaction is uridine(55) in tRNA = pseudouridine(55) in tRNA. Functionally, responsible for synthesis of pseudouridine from uracil-55 in the psi GC loop of transfer RNAs. The polypeptide is tRNA pseudouridine synthase B (Lactobacillus gasseri (strain ATCC 33323 / DSM 20243 / BCRC 14619 / CIP 102991 / JCM 1131 / KCTC 3163 / NCIMB 11718 / NCTC 13722 / AM63)).